A 171-amino-acid polypeptide reads, in one-letter code: uncharacterized protein (171 aa).

The signal sequence occupies residues 1-18 (MRYSKLTMLIPCALLLSA). A lipid anchor (N-palmitoyl cysteine) is attached at Cys-19. Residue Cys-19 is the site of S-diacylglycerol cysteine attachment.

It localises to the cell membrane. This is an uncharacterized protein from Escherichia coli (strain K12).